The primary structure comprises 49 residues: Large ribosomal subunit protein bL33 (49 aa).

This sequence belongs to the bacterial ribosomal protein bL33 family.

This chain is Large ribosomal subunit protein bL33, found in Pelotomaculum thermopropionicum (strain DSM 13744 / JCM 10971 / SI).